Consider the following 368-residue polypeptide: Homoserine O-acetyltransferase (368 aa).

An AB hydrolase-1 domain is found at 44–350; the sequence is NAILVAHAWT…AYGHDAFLLE (307 aa). The Nucleophile role is filled by S150. R217 provides a ligand contact to substrate. Residues D311 and H344 contribute to the active site. A substrate-binding site is contributed by D345.

The protein belongs to the AB hydrolase superfamily. MetX family. In terms of assembly, homodimer.

It is found in the cytoplasm. The catalysed reaction is L-homoserine + acetyl-CoA = O-acetyl-L-homoserine + CoA. Its pathway is amino-acid biosynthesis; L-methionine biosynthesis via de novo pathway; O-acetyl-L-homoserine from L-homoserine: step 1/1. Functionally, transfers an acetyl group from acetyl-CoA to L-homoserine, forming acetyl-L-homoserine. The polypeptide is Homoserine O-acetyltransferase (Geobacter sulfurreducens (strain ATCC 51573 / DSM 12127 / PCA)).